A 192-amino-acid polypeptide reads, in one-letter code: BON1-associated protein 1 (192 aa).

One can recognise a C2 domain in the interval 1–119 (MIYFGRSIDN…RYSPEGHLNF (119 aa)).

Interacts with BON1 (via VWA domain), BON2 and BON3. In terms of tissue distribution, expressed in roots, leaves, stems and flowers.

The protein localises to the membrane. Its function is as follows. Negative regulator of cell death and defense responses. Exhibits calcium-dependent phospholipid binding properties. This Arabidopsis thaliana (Mouse-ear cress) protein is BON1-associated protein 1 (BAP1).